We begin with the raw amino-acid sequence, 394 residues long: A-type flagellin (394 aa).

This sequence belongs to the bacterial flagellin family. In terms of processing, phosphorylated on tyrosine residue(s). Post-translationally, flagellin from strain 5939 but not from strain 170018 is glycosylated.

It localises to the secreted. It is found in the bacterial flagellum. Functionally, flagellin is the subunit protein which polymerizes to form the filaments of bacterial flagella. The polypeptide is A-type flagellin (fliC) (Pseudomonas aeruginosa).